A 693-amino-acid polypeptide reads, in one-letter code: Polyribonucleotide nucleotidyltransferase (693 aa).

Mg(2+)-binding residues include Asp489 and Asp495. The KH domain maps to 556–615 (PQIHVMNINPAKIKDVVGRGGATVKGIVEKTGAQIDTSDSGEVKVFAKDKKSMDMAVAMI). Positions 625 to 693 (GQVYKGKIVK…GRVKLSLVAR (69 aa)) constitute an S1 motif domain.

Belongs to the polyribonucleotide nucleotidyltransferase family. Component of the RNA degradosome, which is a multiprotein complex involved in RNA processing and mRNA degradation. Mg(2+) is required as a cofactor.

Its subcellular location is the cytoplasm. It carries out the reaction RNA(n+1) + phosphate = RNA(n) + a ribonucleoside 5'-diphosphate. Functionally, involved in mRNA degradation. Catalyzes the phosphorolysis of single-stranded polyribonucleotides processively in the 3'- to 5'-direction. In Francisella tularensis subsp. mediasiatica (strain FSC147), this protein is Polyribonucleotide nucleotidyltransferase.